Reading from the N-terminus, the 470-residue chain is Pancreatic lipase-related protein 2 (470 aa).

Residues methionine 1 to glycine 18 form the signal peptide. Residues cysteine 22 and cysteine 28 are joined by a disulfide bond. Residues isoleucine 94–leucine 106 form a required for galactolipase activity region. Cysteine 110 and cysteine 121 are oxidised to a cystine. Serine 172 (nucleophile) is an active-site residue. Aspartate 196 functions as the Charge relay system in the catalytic mechanism. Ca(2+)-binding residues include glutamate 207, arginine 210, aspartate 212, and aspartate 215. Cysteines 257 and 281 form a disulfide. The segment at glutamate 258–alanine 280 is required for galactolipase activity. The active-site Charge relay system is histidine 283. Disulfide bonds link cysteine 305–cysteine 316 and cysteine 319–cysteine 324. N-linked (GlcNAc...) asparagine glycosylation is found at asparagine 354 and asparagine 429. One can recognise a PLAT domain in the interval tryptophan 358–cysteine 470. A disulfide bridge links cysteine 454 with cysteine 470.

Belongs to the AB hydrolase superfamily. Lipase family. Pancreas.

Its subcellular location is the secreted. It localises to the zymogen granule membrane. It is found in the cell projection. The protein resides in the neuron projection. It carries out the reaction a triacylglycerol + H2O = a diacylglycerol + a fatty acid + H(+). It catalyses the reaction a 1,2-diacyl-3-O-(beta-D-galactosyl)-sn-glycerol + 2 H2O = 3-beta-D-galactosyl-sn-glycerol + 2 a fatty acid + 2 H(+). The enzyme catalyses 1,2,3-tri-(9Z-octadecenoyl)-glycerol + H2O = di-(9Z)-octadecenoylglycerol + (9Z)-octadecenoate + H(+). The catalysed reaction is di-(9Z)-octadecenoylglycerol + H2O = (9Z-octadecenoyl)-glycerol + (9Z)-octadecenoate + H(+). It carries out the reaction (9Z-octadecenoyl)-glycerol + H2O = glycerol + (9Z)-octadecenoate + H(+). It catalyses the reaction 1-(9Z-octadecenoyl)-glycerol + H2O = glycerol + (9Z)-octadecenoate + H(+). The enzyme catalyses 1,2,3-tripropanoylglycerol + H2O = dipropanoylglycerol + propanoate + H(+). The catalysed reaction is 1,2,3-tributanoylglycerol + H2O = dibutanoylglycerol + butanoate + H(+). It carries out the reaction 1,2,3-trioctanoylglycerol + H2O = dioctanoylglycerol + octanoate + H(+). It catalyses the reaction 1,2-didecanoylglycerol + H2O = decanoylglycerol + decanoate + H(+). The enzyme catalyses long chain 1,2-diacyl-3-O-beta-D-galactosyl-sn-glycerol + H2O = long chain acyl-3-O-beta-D-galactosyl-sn-glycerol + a fatty acid + H(+). The catalysed reaction is 1,2-dioctanoyl-3-O-beta-D-galactosyl-sn-glycerol + H2O = octanoyl-3-(beta-D-galactosyl)-sn-glycerol + octanoate + H(+). It carries out the reaction 1,2-didodecanoyl-3-beta-D-galactosyl-sn-glycerol + H2O = dodecanoyl-3-beta-D-galactosyl-sn-glycerol + dodecanoate + H(+). It catalyses the reaction 1-beta-D-galactosyl-2,3-didodecanoyl-sn-glycerol + H2O = 1-beta-D-galactosyl-dodecanoyl-sn-glycerol + dodecanoate + H(+). The enzyme catalyses a 1,2-diacyl-3-O-[alpha-D-galactosyl-(1-&gt;6)-beta-D-galactosyl]-sn-glycerol + H2O = acyl-3-O-[alpha-D-galactosyl-(1-&gt;6)-beta-D-galactosyl]-sn-glycerol + a fatty acid + H(+). The catalysed reaction is long chain 1,2-diacyl-3-O-[alpha-D-galactosyl-(1-&gt;6)-beta-D-galactosyl]-sn-glycerol + H2O = long chain acyl-3-O-[alpha-D-galactosyl-(1-&gt;6)-beta-D-galactosyl]-sn-glycerol + a fatty acid + H(+). It carries out the reaction 1,2-dioctanoyl-3-O-[alpha-D-galactosyl-(1-&gt;6)-beta-D-galactosyl]-sn-glycerol + H2O = octanoyl-3-O-[alpha-D-galactosyl-(1-&gt;6)-beta-D-galactosyl]-sn-glycerol + octanoate + H(+). It catalyses the reaction 1,2-didodecanoyl-3-O-[alpha-D-galactosyl-(1-&gt;6)-beta-D-galactosyl]-sn-glycerol + H2O = dodecanoyl-3-O-[alpha-D-galactosyl-(1-&gt;6)-beta-D-galactosyl]-sn-glycerol + dodecanoate + H(+). The enzyme catalyses a 1,2-diacyl-sn-glycero-3-phosphocholine + H2O = a monoacyl-sn-glycero-3-phosphocholine + a fatty acid + H(+). It participates in glycerolipid metabolism; triacylglycerol degradation. It functions in the pathway glycolipid metabolism. Its activity is regulated as follows. Triacylglycerol lipase activity is inhibited by increasing bile salts concentrations and not reactivated by CLPS. Its function is as follows. Lipase that primarily hydrolyzes triglycerides and galactosylglycerides. In neonates, may play a major role in pancreatic digestion of dietary fats such as milk fat globules enriched in long-chain triglycerides. Hydrolyzes short-, medium- and long-chain fatty acyls in triglycerides without apparent positional specificity. Can completely deacylate triacylglycerols. When the liver matures and bile salt synthesis increases, likely functions mainly as a galactolipase and monoacylglycerol lipase. Hydrolyzes monogalactosyldiglycerols (MGDG) and digalactosyldiacylglycerols (DGDG) present in a plant-based diet, releasing long-chain polyunsaturated fatty acids. Hydrolyzes medium- and long-chain fatty acyls in galactolipids. May act together with LIPF to hydrolyze partially digested triglycerides. Hydrolyzes long-chain monoglycerides with high efficiency. In cytotoxic T cells, contributes to perforin-dependent cell lysis, but is unlikely to mediate direct cytotoxicity. Also has low phospholipase activity. In neurons, required for the localization of the phospholipid 1-oleoyl-2-palmitoyl-PC (OPPC) to neurite tips through acyl chain remodeling of membrane phospholipids. The resulting OPPC-rich lipid membrane domain recruits the t-SNARE protein STX4 by selectively interacting with the STX4 transmembrane domain and this promotes surface expression of the dopamine transporter SLC6A3/DAT at neurite tips by facilitating fusion of SLC6A3-containing transport vesicles with the plasma membrane. The chain is Pancreatic lipase-related protein 2 from Myocastor coypus (Coypu).